The primary structure comprises 76 residues: Small ribosomal subunit protein uS17 (76 aa).

The protein belongs to the universal ribosomal protein uS17 family. As to quaternary structure, part of the 30S ribosomal subunit.

In terms of biological role, one of the primary rRNA binding proteins, it binds specifically to the 5'-end of 16S ribosomal RNA. This is Small ribosomal subunit protein uS17 from Ruegeria sp. (strain TM1040) (Silicibacter sp.).